The sequence spans 284 residues: MFGKRKDSKNKAMRDNEELTPWERQQLLREENIEKKQKKSKKILVSSNLVKFNGLRKRRLQKRVITLASIFGISAIISLYAILPVSRVSNIEIEGTDSQTKTAIIEASQVKKNESLFAVVPTKFLIRQRIKNDVATVKDVNISLKKNVVKFKVTEYDIVGYIQRKNTYYKLTSNGRELNVGQKATNGNYPLFLDFKKKTLLHEAAQQVGEMPKKVRFGISEIHSSPTKVNPKRVRLVMNDGNEVIGSIDTLATKMSYYPSMAKALGKKGVIDLEVGAYAYPYBK.

Positions 1–21 are disordered; that stretch reads MFGKRKDSKNKAMRDNEELTP. Over 1-63 the chain is Cytoplasmic; it reads MFGKRKDSKN…GLRKRRLQKR (63 aa). Residues 64–84 traverse the membrane as a helical segment; the sequence is VITLASIFGISAIISLYAILP. At 85–284 the chain is on the extracellular side; the sequence is VSRVSNIEIE…VGAYAYPYBK (200 aa). One can recognise a POTRA domain in the interval 86–156; that stretch reads SRVSNIEIEG…NVVKFKVTEY (71 aa).

This sequence belongs to the FtsQ/DivIB family. DivIB subfamily.

The protein resides in the cell membrane. Functionally, cell division protein that may be involved in stabilizing or promoting the assembly of the division complex. This is Cell division protein DivIB from Ligilactobacillus salivarius (strain CECT 5713) (Lactobacillus salivarius).